We begin with the raw amino-acid sequence, 236 residues long: Phycobilisome rod-core linker polypeptide cpcG (236 aa).

In terms of domain architecture, PBS-linker spans 11 to 193 (STQNQRVNGF…LDYNFLYKKN (183 aa)).

The protein belongs to the phycobilisome linker protein family. In terms of assembly, the phycobilisome is a hemidiscoidal structure that is composed of two distinct substructures: a core complex and a number of rods radiating from the core.

It localises to the plastid. The protein localises to the chloroplast. The protein resides in the chloroplast thylakoid membrane. Rod-core linker protein required for attachment of phycocyanin to allophycocyanin in cores of phycobilisomes. In terms of biological role, linker polypeptides determine the state of aggregation and the location of the disk-shaped phycobiliprotein units within the phycobilisome and modulate their spectroscopic properties in order to mediate a directed and optimal energy transfer. In Aglaothamnion neglectum (Red alga), this protein is Phycobilisome rod-core linker polypeptide cpcG (cpcG).